Here is a 638-residue protein sequence, read N- to C-terminus: MQVEHEVATEGGQAPASSGHRKGIAGLAVAAIGVVYGDIGTSPLYTLKEVFNGPHAVPVNEANVYGILSLVFWALVTVVSAKYVVFITRADNRGEGGIMALTSLALRVVQPGRRAWWLSVLGVFGAALFYGDGMITPAISVLSAVEGLEVATPAFKPFVIPIALVVLVGLFVMQRRGTGSVGAIFGPVMVCWFLVLAVLGINGITLHPEIIGALDPRWAARFFIDQPLIGWLALGAVVLAITGGEALYADMGHFGRRPIKLAWFSLVFPALYLNYLGQGALILDHPDNVRNPFYMLVPDALVYPMVGMATLATIIASQAVISGAFSLTRQAIQLGYAPRMQTLHTSEHEIGQIYVPGVNWMLLGAVVALVVGFQSSSALASAYGIAVTLTMMIDTVLAFVVVRSLWKWGRAKAVLFLVVFLAVDIAFFSATTVKIFAGGWFPLLIGAAIFTLLRTWKRGRSLLNERIRSDTMPLDIFIQSMFQSPPPRVEGTAVFMTTWLDGVPRALLHNLIHNKVLHERVVLLRVDTADVPHVPEGERVEVEEIDYGFYRVRVHYGFKDDPDIPAALGLCAQRGLPFDMMETSFFLGRETLVSRVGSGMPQWREKLFILLFRNAGSAADYFCIPPNRVVELGTQVEL.

Residues 1–20 (MQVEHEVATEGGQAPASSGH) are disordered. 12 helical membrane-spanning segments follow: residues 24–44 (IAGLAVAAIGVVYGDIGTSPL), 67–87 (ILSLVFWALVTVVSAKYVVFI), 115–135 (AWWLSVLGVFGAALFYGDGMI), 153–173 (PAFKPFVIPIALVVLVGLFVM), 181–201 (VGAIFGPVMVCWFLVLAVLGI), 228–248 (LIGWLALGAVVLAITGGEALY), 263–283 (WFSLVFPALYLNYLGQGALIL), 301–321 (LVYPMVGMATLATIIASQAVI), 353–373 (IYVPGVNWMLLGAVVALVVGF), 382–402 (AYGIAVTLTMMIDTVLAFVVV), 413–433 (AVLFLVVFLAVDIAFFSATTV), and 435–455 (IFAGGWFPLLIGAAIFTLLRT).

It belongs to the HAK/KUP transporter (TC 2.A.72) family.

The protein localises to the cell inner membrane. It catalyses the reaction K(+)(in) + H(+)(in) = K(+)(out) + H(+)(out). Its function is as follows. Transport of potassium into the cell. Likely operates as a K(+):H(+) symporter. The protein is Probable potassium transport system protein Kup of Azoarcus sp. (strain BH72).